Here is a 448-residue protein sequence, read N- to C-terminus: Vacuolar amino acid transporter 6 (448 aa).

Topologically, residues 1-7 are cytoplasmic; the sequence is MVASIRS. The chain crosses the membrane as a helical span at residues 8 to 28; the sequence is GVLTLLHTACGAGILAMPYAF. Topologically, residues 29 to 32 are vacuolar; that stretch reads KPFG. Residues 33 to 53 form a helical membrane-spanning segment; it reads LIPGVIMIVLCGACAMQSLFI. Topologically, residues 54–80 are cytoplasmic; that stretch reads QARVAKYVPQGRASFSALTRLINPNLG. The chain crosses the membrane as a helical span at residues 81–101; sequence IVFDLAIAIKCFGVGVSYMIV. Residues 102–125 lie on the Vacuolar side of the membrane; the sequence is VGDLMPQIMSVWTRNAWLLNRNVQ. The chain crosses the membrane as a helical span at residues 126–146; it reads ISLIMLFFVAPLSFLKKLNSL. The Cytoplasmic segment spans residues 147-150; sequence RYAS. The helical transmembrane segment at 151-171 threads the bilayer; it reads MVAISSVAYLCVLVLLHYVAP. Topologically, residues 172 to 195 are vacuolar; it reads SDEILRLKGRISYLLPPQSHDLNV. The chain crosses the membrane as a helical span at residues 196 to 216; it reads LNTLPIFVFAYTCHHNMFSII. Residues 217–229 lie on the Cytoplasmic side of the membrane; it reads NEQRSSRFEHVMK. Residues 230–250 traverse the membrane as a helical segment; sequence IPLIAISLALILYIAIGCAGY. The Vacuolar segment spans residues 251–267; the sequence is LTFGDNIIGNIIMLYPQ. The helical transmembrane segment at 268-288 threads the bilayer; it reads AVSSTIGRIAIVLLVMLAFPL. The Cytoplasmic portion of the chain corresponds to 289 to 357; the sequence is QCHPARASIH…PKETPLRGKS (69 aa). Position 344 is a phosphoserine (Ser-344). Residues 358–378 form a helical membrane-spanning segment; that stretch reads FIVITCSILVASYLVAISVSS. Topologically, residues 379–381 are vacuolar; sequence LAR. Residues 382–402 form a helical membrane-spanning segment; the sequence is VLAIVGATGSTSISFILPGLF. Residues 403–424 lie on the Cytoplasmic side of the membrane; the sequence is GYKLIGTEHKTAVPLTTKIFKY. The helical transmembrane segment at 425 to 445 threads the bilayer; that stretch reads TGLLLFIWGLIIMITCLTAAL. Residues 446–448 are Vacuolar-facing; that stretch reads KLN.

This sequence belongs to the amino acid/polyamine transporter 2 family.

The protein resides in the vacuole membrane. Functionally, involved in amino acid efflux from the vacuole to the cytoplasm. Capable of transporting aspartate and glutamate. Requires ATP for function. This Saccharomyces cerevisiae (strain ATCC 204508 / S288c) (Baker's yeast) protein is Vacuolar amino acid transporter 6 (AVT6).